The following is a 127-amino-acid chain: ATP synthase epsilon chain (127 aa).

The protein belongs to the ATPase epsilon chain family. In terms of assembly, F-type ATPases have 2 components, CF(1) - the catalytic core - and CF(0) - the membrane proton channel. CF(1) has five subunits: alpha(3), beta(3), gamma(1), delta(1), epsilon(1). CF(0) has three main subunits: a, b and c.

The protein resides in the cell inner membrane. Its function is as follows. Produces ATP from ADP in the presence of a proton gradient across the membrane. This is ATP synthase epsilon chain from Leptospira borgpetersenii serovar Hardjo-bovis (strain JB197).